A 626-amino-acid polypeptide reads, in one-letter code: Alpha terpineol synthase, chloroplastic (626 aa).

A chloroplast-targeting transit peptide spans 1–38 (MALLSVAPLASKSRLHKTLITSAHHLKPSPTTIPTLPV). Mg(2+) is bound by residues Asp-377, Asp-381, and Asp-529. Positions 377–381 (DDIYD) match the DDXXD motif motif.

This sequence belongs to the terpene synthase family. Tpsd subfamily. Mg(2+) is required as a cofactor. Requires Mn(2+) as cofactor.

The protein localises to the plastid. The protein resides in the chloroplast. The catalysed reaction is (2E)-geranyl diphosphate + H2O = (S)-alpha-terpineol + diphosphate. It catalyses the reaction (2E)-geranyl diphosphate + H2O = (R)-alpha-terpineol + diphosphate. It carries out the reaction (2E)-geranyl diphosphate + H2O = (2E)-geraniol + diphosphate. The enzyme catalyses (2E)-geranyl diphosphate = terpinolene + diphosphate. The catalysed reaction is (2E)-geranyl diphosphate = (4S)-limonene + diphosphate. Its pathway is terpene metabolism; oleoresin biosynthesis. It functions in the pathway secondary metabolite biosynthesis; terpenoid biosynthesis. In terms of biological role, monoterpene synthase (TPS) involved in the biosynthesis of monoterpene natural products included in conifer oleoresin secretions and volatile emissions; these compounds contribute to biotic and abiotic stress defense against herbivores and pathogens. Catalyzes the conversion of (2E)-geranyl diphosphate (GPP) to (-)-alpha-terpineol, (+)-alpha-terpineol and terpin-4-ol, and, to a lower extent, to geraniol, terpinolene and (-)-limonene. In Pinus banksiana (Jack pine), this protein is Alpha terpineol synthase, chloroplastic.